A 93-amino-acid chain; its full sequence is MSRSIKKPPFCAPHVLRLVNKAIAQNKLNSIINIHSRSSVILNKFIGLTFGVYNGKTYVPVKVNDNMVGRKFGEFSPTRRYTGHVGDKKVSRK.

This sequence belongs to the universal ribosomal protein uS19 family.

In terms of biological role, protein S19 forms a complex with S13 that binds strongly to the 16S ribosomal RNA. The sequence is that of Small ribosomal subunit protein uS19 from Ehrlichia chaffeensis (strain ATCC CRL-10679 / Arkansas).